The following is a 342-amino-acid chain: Phenylalanine--tRNA ligase alpha subunit (342 aa).

Position 260 (glutamate 260) interacts with Mg(2+).

This sequence belongs to the class-II aminoacyl-tRNA synthetase family. Phe-tRNA synthetase alpha subunit type 1 subfamily. In terms of assembly, tetramer of two alpha and two beta subunits. Requires Mg(2+) as cofactor.

The protein localises to the cytoplasm. It carries out the reaction tRNA(Phe) + L-phenylalanine + ATP = L-phenylalanyl-tRNA(Phe) + AMP + diphosphate + H(+). In Mycobacterium avium (strain 104), this protein is Phenylalanine--tRNA ligase alpha subunit.